Reading from the N-terminus, the 1217-residue chain is Endonuclease YhcR (1217 aa).

A signal peptide spans 1-46; the sequence is MLSVEMISRQNRCHYVYKGGNMMRRILHIVLITALMFLNVMYTFEA. One can recognise a TNase-like domain in the interval 376–517; it reads GEYEGIVDRV…KKDQKGIWNE (142 aa). Active-site residues include arginine 404, glutamate 412, and arginine 460. Residues 590–828 form a phosphoesterase region; that stretch reads LRILSMNDLH…VIFAAHNHQV (239 aa). Positions 597, 599, 647, 680, 792, and 824 each coordinate a divalent metal cation. Residues 829 to 1085 are 5'-nucleotidase; it reads VNGEVNGKLI…AYTKEGRIKL (257 aa). Substrate contacts are provided by residues phenylalanine 965 and 1035–1042; that span reads FMATATGA. Positions 1087–1142 are disordered; it reads EASDIEDPVTEDPITEEPGDDPGTEDPIKEDPRPGEDLPDIKETPGTAPVHQLPPS. The segment covering 1089 to 1110 has biased composition (acidic residues); it reads SDIEDPVTEDPITEEPGDDPGT. Over residues 1112–1129 the composition is skewed to basic and acidic residues; that stretch reads DPIKEDPRPGEDLPDIKE. Positions 1182 to 1186 match the LPXTG sorting signal motif; it reads LPDTS. Position 1185 is a pentaglycyl murein peptidoglycan amidated threonine (threonine 1185). The propeptide at 1186–1217 is removed by sortase; that stretch reads SAGYYNFMVIGAAVTLSGTYLYVRRKRSASRT.

In the C-terminal section; belongs to the 5'-nucleotidase family. It depends on Ca(2+) as a cofactor. The cofactor is Mn(2+).

It is found in the secreted. The protein resides in the cell wall. Its activity is regulated as follows. Requires a minimum of 0.1 mM of calcium for a significant activity. Maximal activity was observed with concentrations of calcium between 1 to 5 mM. Is 10-fold less active with the corresponding concentrations of manganese. Inhibited by NaCl at concentrations of 100 mM and higher. In terms of biological role, sugar-nonspecific endonuclease that yields nucleotide 3'-monophosphate products. No 5'-nucleotidase activity was detected, using 5'-AMP as the substrate, in the presence of diverse divalent metals and with various pH values. The sequence is that of Endonuclease YhcR (yhcR) from Bacillus subtilis (strain 168).